The sequence spans 538 residues: CWF19-like protein 1 (538 aa).

Residues 298–324 (QGRKRSSTGRDSKSSPHPKQPRKPPQP) are disordered.

Belongs to the CWF19 family. As to expression, expressed in many brain regions, including cerebellum, thalamus and occipital, parietal and temporal lobes (at protein level). Also expressed in the spinal cord (at protein level).

In Homo sapiens (Human), this protein is CWF19-like protein 1 (CWF19L1).